The primary structure comprises 376 residues: tRNA-specific 2-thiouridylase MnmA (376 aa).

Residues 14–21 (GMSGGVDS) and Met-40 contribute to the ATP site. Positions 100-102 (NPD) are interaction with target base in tRNA. Residue Cys-105 is the Nucleophile of the active site. Cys-105 and Cys-202 are joined by a disulfide. Residue Gly-129 coordinates ATP. The interaction with tRNA stretch occupies residues 152–154 (KDQ). The active-site Cysteine persulfide intermediate is Cys-202. The tract at residues 315-316 (RY) is interaction with tRNA.

The protein belongs to the MnmA/TRMU family.

Its subcellular location is the cytoplasm. The catalysed reaction is S-sulfanyl-L-cysteinyl-[protein] + uridine(34) in tRNA + AH2 + ATP = 2-thiouridine(34) in tRNA + L-cysteinyl-[protein] + A + AMP + diphosphate + H(+). Its function is as follows. Catalyzes the 2-thiolation of uridine at the wobble position (U34) of tRNA, leading to the formation of s(2)U34. This is tRNA-specific 2-thiouridylase MnmA from Lactococcus lactis subsp. cremoris (strain MG1363).